Here is a 252-residue protein sequence, read N- to C-terminus: dITP/XTP pyrophosphatase (252 aa).

Position 7 to 12 (7 to 12 (THNEGK)) interacts with substrate. Residue Asp-74 is the Proton acceptor of the active site. Mg(2+) is bound at residue Asp-74. Substrate is bound by residues Ser-75 and 193-196 (FGYD). The interval 202–229 (DDQPAGRVSTEPDHEGEPLTSAEMTPAE) is disordered. Substrate contacts are provided by residues Lys-230 and 235-236 (HR).

This sequence belongs to the HAM1 NTPase family. Homodimer. Mg(2+) is required as a cofactor.

The catalysed reaction is XTP + H2O = XMP + diphosphate + H(+). The enzyme catalyses dITP + H2O = dIMP + diphosphate + H(+). It catalyses the reaction ITP + H2O = IMP + diphosphate + H(+). Functionally, pyrophosphatase that catalyzes the hydrolysis of nucleoside triphosphates to their monophosphate derivatives, with a high preference for the non-canonical purine nucleotides XTP (xanthosine triphosphate), dITP (deoxyinosine triphosphate) and ITP. Seems to function as a house-cleaning enzyme that removes non-canonical purine nucleotides from the nucleotide pool, thus preventing their incorporation into DNA/RNA and avoiding chromosomal lesions. The chain is dITP/XTP pyrophosphatase from Bifidobacterium longum (strain NCC 2705).